Here is a 722-residue protein sequence, read N- to C-terminus: Probable dipeptidyl-peptidase 5 (722 aa).

Positions Met1–Ala18 are cleaved as a signal peptide. N-linked (GlcNAc...) asparagine glycosylation is found at Asn75, Asn78, Asn86, Asn94, Asn151, Asn253, and Asn448. Residue Ser558 is the Charge relay system of the active site. N-linked (GlcNAc...) asparagine glycosylation occurs at Asn605. Catalysis depends on charge relay system residues Asp641 and His673.

The protein belongs to the peptidase S9C family.

The protein resides in the secreted. Extracellular dipeptidyl-peptidase which removes N-terminal dipeptides sequentially from polypeptides having unsubstituted N-termini. This Emericella nidulans (strain FGSC A4 / ATCC 38163 / CBS 112.46 / NRRL 194 / M139) (Aspergillus nidulans) protein is Probable dipeptidyl-peptidase 5 (dpp5).